The following is a 104-amino-acid chain: Small ribosomal subunit protein uS10 (104 aa).

Belongs to the universal ribosomal protein uS10 family. As to quaternary structure, part of the 30S ribosomal subunit.

Involved in the binding of tRNA to the ribosomes. The sequence is that of Small ribosomal subunit protein uS10 from Variovorax paradoxus (strain S110).